Here is a 196-residue protein sequence, read N- to C-terminus: RNA-binding protein with multiple splicing 2 (196 aa).

The RRM domain maps to arginine 20 to alanine 97. The tract at residues aspartate 30–phenylalanine 40 is important for homodimerization.

As to quaternary structure, homodimer. As to expression, expressed in developing heart, pronephros, retina and epiphysis. In adult, high expression in heart, moderate in kidney, undetectable in liver, lung and skeletal muscle.

The protein localises to the cytoplasm. Its subcellular location is the nucleus. It localises to the stress granule. RNA-binding protein involved in the regulation of smooth muscle cell differentiation and proliferation in the gastrointestinal system. Binds NOG mRNA, the major inhibitor of the bone morphogenetic protein (BMP) pathway. Mediates an increase of NOG mRNA levels, thereby contributing to the negative regulation of BMP signaling pathway and promoting reversible dedifferentiation and proliferation of smooth muscle cells. Acts as a pre-mRNA alternative splicing regulator. Mediates ACTN1 and FLNB alternative splicing. Likely binds to mRNA tandem CAC trinucleotide or CA dinucleotide motifs. The polypeptide is RNA-binding protein with multiple splicing 2 (Xenopus laevis (African clawed frog)).